The sequence spans 514 residues: Uronyl 2-sulfotransferase homolog pip (514 aa).

Topologically, residues 1–30 (MSLNAERSYKMKLRDVENAFKYRRIPYPKR) are cytoplasmic. Residues 31–50 (SVELIALLAISCTFFLFMHT) form a helical; Signal-anchor for type II membrane protein membrane-spanning segment. At 51–514 (NKLNSRLKEM…EQQNEYNEDY (464 aa)) the chain is on the lumenal side. Basic and acidic residues predominate over residues 112 to 121 (HDRRSSEEQL). Positions 112 to 185 (HDRRSSEEQL…DEDEVEENDD (74 aa)) are disordered. Positions 127 to 140 (HGHHHDHHSHHHHM) are enriched in basic residues. Residues 155–170 (HDKQLAVPDNKHKEDE) are compositionally biased toward basic and acidic residues. A compositionally biased stretch (acidic residues) spans 171-185 (VHYEDDEDEVEENDD). An N-linked (GlcNAc...) asparagine glycan is attached at Asn-207. His-282 is an active-site residue. Residues Asn-287, Asn-416, Asn-451, and Asn-467 are each glycosylated (N-linked (GlcNAc...) asparagine).

The protein belongs to the sulfotransferase 3 family. As to quaternary structure, interacts with wbl/windbeutel; the interaction is direct and does not require pip to be folded. Ovary-specific. Specifically expressed in the ventral follicle cells of stage 9-10 egg chambers. As to expression, expressed in ovaries. Specifically expressed in the ventral follicle cells of stage 9-10 egg chambers.

Its subcellular location is the golgi apparatus membrane. Sulfotransferase involved in dorsoventral axis patterning in early embryos. Required for the ventral activation of ea/easter by the protease snk in the perivitelline space between the embryonic membrane and the eggshell; activation of ea requires both activation of the ndl-gd-snk protease cascade and sulfation of a vitelline membrane component by pip. Probably acts by mediating the sulfation of some glycoprotein or glycosaminoglycan stably deposited in the vitelline membrane, whose ventrally localized modification leads to spatially restricted activation of the protease cascade resulting in localized activation of the spz Toll receptor ligand by ea. Its function is as follows. Probably required redundantly with isoform H for dorsoventral axis patterning in embryos. Lacks 2-O-sulfotransferase activity towards completely desulfated N-sulfated (CDSNS) heparin, chondroitin, and chondroitin sulfate A, B (dermatan sulfate), and C. Sulfates several components of the eggshell vitelline membrane, including Vml, Vm26Aa, Vm32E and psd/palisade/Fcp26Aa. Functionally, probably required redundantly with isoform A for dorsoventral axis patterning in embryos. In terms of biological role, lacks 2-O-sulfotransferase activity towards CDSNS heparin, chondroitin, and chondroitin sulfate A, B (dermatan sulfate), and C. This is Uronyl 2-sulfotransferase homolog pip from Drosophila melanogaster (Fruit fly).